The sequence spans 366 residues: MSVIELFQKLLKFKSITPNDDGAFDFIQEYLGNEWNCIKVDMEGVKNRFYYKKFNDTKQHLCFAGHIDVVPVGNGWEVDPFAAEVIDGVITARGAQDMKSGDAAFLYACKNAKNFDGTLSILMTSDEEGEGTYGTIKMLEHLKQINMIPNYAVVAEPTCEEVFGDAIKVGRRGSINGYITIKGKQGHAAYPEKCINPVHNFAHILPKIAGINLDNGDEYFAPSKLVITDIRAGMEVTNVTPNELKIMFNVRNSTNTTKEDVENFINQNLKGLDYDFRITQGSFPFVTNKTSKVVIAMENSIYDILKIKTKHSTAGGTSDARYFGAFGIEAIEFGVINDTIHSINEKTTVKEVEGLTEVFENLIKNF.

Position 66 (H66) interacts with Zn(2+). Residue D68 is part of the active site. Residue D97 participates in Zn(2+) binding. E127 functions as the Proton acceptor in the catalytic mechanism. Positions 128, 156, and 341 each coordinate Zn(2+).

This sequence belongs to the peptidase M20A family. DapE subfamily. Homodimer. Requires Zn(2+) as cofactor. Co(2+) is required as a cofactor.

The enzyme catalyses N-succinyl-(2S,6S)-2,6-diaminopimelate + H2O = (2S,6S)-2,6-diaminopimelate + succinate. The protein operates within amino-acid biosynthesis; L-lysine biosynthesis via DAP pathway; LL-2,6-diaminopimelate from (S)-tetrahydrodipicolinate (succinylase route): step 3/3. Functionally, catalyzes the hydrolysis of N-succinyl-L,L-diaminopimelic acid (SDAP), forming succinate and LL-2,6-diaminopimelate (DAP), an intermediate involved in the bacterial biosynthesis of lysine and meso-diaminopimelic acid, an essential component of bacterial cell walls. This is Succinyl-diaminopimelate desuccinylase from Aliarcobacter butzleri (strain RM4018) (Arcobacter butzleri).